Reading from the N-terminus, the 170-residue chain is ATP synthase subunit b (170 aa).

The chain crosses the membrane as a helical span at residues 22–44; the sequence is IINLAVVVFGLYKFLPGFLGKIL.

The protein belongs to the ATPase B chain family. As to quaternary structure, F-type ATPases have 2 components, F(1) - the catalytic core - and F(0) - the membrane proton channel. F(1) has five subunits: alpha(3), beta(3), gamma(1), delta(1), epsilon(1). F(0) has four main subunits: a(1), b(1), b'(1) and c(10-14). The alpha and beta chains form an alternating ring which encloses part of the gamma chain. F(1) is attached to F(0) by a central stalk formed by the gamma and epsilon chains, while a peripheral stalk is formed by the delta, b and b' chains.

The protein resides in the cellular thylakoid membrane. Functionally, f(1)F(0) ATP synthase produces ATP from ADP in the presence of a proton or sodium gradient. F-type ATPases consist of two structural domains, F(1) containing the extramembraneous catalytic core and F(0) containing the membrane proton channel, linked together by a central stalk and a peripheral stalk. During catalysis, ATP synthesis in the catalytic domain of F(1) is coupled via a rotary mechanism of the central stalk subunits to proton translocation. In terms of biological role, component of the F(0) channel, it forms part of the peripheral stalk, linking F(1) to F(0). The chain is ATP synthase subunit b from Prochlorococcus marinus (strain NATL1A).